The chain runs to 312 residues: Tetraacyldisaccharide 4'-kinase (312 aa).

Residue 60–67 (IAGGSGKT) participates in ATP binding.

The protein belongs to the LpxK family.

It catalyses the reaction a lipid A disaccharide + ATP = a lipid IVA + ADP + H(+). The protein operates within glycolipid biosynthesis; lipid IV(A) biosynthesis; lipid IV(A) from (3R)-3-hydroxytetradecanoyl-[acyl-carrier-protein] and UDP-N-acetyl-alpha-D-glucosamine: step 6/6. In terms of biological role, transfers the gamma-phosphate of ATP to the 4'-position of a tetraacyldisaccharide 1-phosphate intermediate (termed DS-1-P) to form tetraacyldisaccharide 1,4'-bis-phosphate (lipid IVA). This Helicobacter acinonychis (strain Sheeba) protein is Tetraacyldisaccharide 4'-kinase.